The chain runs to 371 residues: 4-hydroxybenzoate polyprenyltransferase, mitochondrial (371 aa).

Residues 1–45 (MLGSCGAGLVRGLRAETQAWLWGTRGRSLALVHAARGLHAANWQP) constitute a mitochondrion transit peptide. Over 46–83 (SPGQGPRGRPLSLSAAAVVNSAPRPLQPYLRLMRLDKP) the chain is Mitochondrial matrix. Residues 84-104 (IGTWLLYLPCTWSIGLAADPG) traverse the membrane as a helical segment. Topologically, residues 105–108 (CLPD) are mitochondrial intermembrane. A helical membrane pass occupies residues 109–129 (WYMLSLFGTGAVLMRGAGCTI). At 130-171 (NDMWDRDYDKKVTRTASRPIAAGDISTFRSFVFLGGQLTLAL) the chain is on the mitochondrial matrix side. Residues 172–192 (GVLLCLNYYSIALGAASLLLV) traverse the membrane as a helical segment. Residues 193-200 (TTYPLMKR) lie on the Mitochondrial intermembrane side of the membrane. The helical transmembrane segment at 201–221 (ITYWPQLALGLTFNWGALLGW) threads the bilayer. The Mitochondrial matrix segment spans residues 222 to 231 (SAVKGSCDPS). A helical membrane pass occupies residues 232–252 (VCLPLYFSGIMWTLIYDTIYA). The Mitochondrial intermembrane portion of the chain corresponds to 253–277 (HQDKKDDALIGLKSTALLFREDTKK). A helical transmembrane segment spans residues 278–298 (WLSGFSVAMLGALSLVGVNSG). At 299-300 (QT) the chain is on the mitochondrial matrix side. Residues 301 to 321 (MPYYTALAAVGAHLAHQIYTL) form a helical membrane-spanning segment. The Mitochondrial intermembrane portion of the chain corresponds to 322–332 (DINRPEDCWEK). The chain crosses the membrane as a helical span at residues 333 to 353 (FTSNRTIGLIIFLGIVLGNLC). The Mitochondrial matrix segment spans residues 354–371 (KAKETDKTRKNIENRMEN).

Belongs to the UbiA prenyltransferase family. Mg(2+) serves as cofactor.

It is found in the mitochondrion inner membrane. The enzyme catalyses an all-trans-polyprenyl diphosphate + 4-hydroxybenzoate = a 4-hydroxy-3-(all-trans-polyprenyl)benzoate + diphosphate. The catalysed reaction is all-trans-decaprenyl diphosphate + 4-hydroxybenzoate = 4-hydroxy-3-(all-trans-decaprenyl)benzoate + diphosphate. It catalyses the reaction all-trans-nonaprenyl diphosphate + 4-hydroxybenzoate = 4-hydroxy-3-(all-trans-nonaprenyl)benzoate + diphosphate. It functions in the pathway cofactor biosynthesis; ubiquinone biosynthesis. In terms of biological role, mediates the second step in the final reaction sequence of coenzyme Q (CoQ) biosynthesis. Catalyzes the prenylation of para-hydroxybenzoate (PHB) with an all-trans polyprenyl donor (such as all-trans-decaprenyl diphosphate). The length of the polyprenyl side chain varies depending on the species, in humans, the side chain is comprised of 10 isoprenyls (decaprenyl) producing CoQ10 (also known as ubiquinone), whereas rodents predominantly generate CoQ9. However, this specificity is not complete, human tissues have low amounts of CoQ9 and rodent organs contain some CoQ10. Plays a central role in the biosynthesis of CoQ10. CoQ10 is a vital molecule that transports electrons from mitochondrial respiratory chain complexes. CoQs also function as cofactors for uncoupling protein and play a role as regulators of the extracellularly-induced ceramide-dependent apoptotic pathway. Regulates mitochondrial permeability transition pore (mPTP) opening and ROS production (pivotal events in cell death) in a tissue specific manner. The sequence is that of 4-hydroxybenzoate polyprenyltransferase, mitochondrial from Bos taurus (Bovine).